We begin with the raw amino-acid sequence, 188 residues long: Epididymal-specific lipocalin-5 (188 aa).

The N-terminal stretch at 1–19 (MENIMPFALLGLCVGLAAG) is a signal peptide. Cys-82 and Cys-176 form a disulfide bridge.

Belongs to the calycin superfamily. Lipocalin family. In terms of processing, there are two similar, immunologically cross-reacting forms of this protein, designated B and C, which probably result from different processing of the amino end. Post-translationally, the N-terminus of form C is probably blocked. In terms of tissue distribution, synthesized exclusively in the proximal part (caput epididymidis) of the epididymis. It makes up a substantial part of the total protein in the epididymal luminal fluid and binds to the sperm membrane.

It localises to the secreted. Its function is as follows. Associates with spermatozoa in the epididymal fluid but does not bind tightly to them. Binds both all-trans and 9-cis retinoic acid. May act as a retinoid carrier protein which is required for epididymal function and/or sperm maturation. This Rattus norvegicus (Rat) protein is Epididymal-specific lipocalin-5 (Lcn5).